We begin with the raw amino-acid sequence, 343 residues long: Phenylalanine--tRNA ligase alpha subunit (343 aa).

Glutamate 256 is a Mg(2+) binding site.

This sequence belongs to the class-II aminoacyl-tRNA synthetase family. Phe-tRNA synthetase alpha subunit type 1 subfamily. Tetramer of two alpha and two beta subunits. It depends on Mg(2+) as a cofactor.

Its subcellular location is the cytoplasm. It catalyses the reaction tRNA(Phe) + L-phenylalanine + ATP = L-phenylalanyl-tRNA(Phe) + AMP + diphosphate + H(+). The sequence is that of Phenylalanine--tRNA ligase alpha subunit from Aster yellows witches'-broom phytoplasma (strain AYWB).